The following is a 303-amino-acid chain: uncharacterized protein (303 aa).

2 disordered regions span residues 1–89 (MTSP…NVRS) and 132–159 (SELPDLSGPVQRTVPCKPSPDRGSSTPR). A compositionally biased stretch (polar residues) spans 61–89 (RASQSGYRPSDPLTTTRQSNPAPGANVRS). 2 helical membrane-spanning segments follow: residues 205–225 (LLLSVALFFVWMIAVAFLYLL) and 264–284 (VLVGLVNIVLMTTMAAIAAFV).

This sequence to M.tuberculosis Rv0007.

It is found in the cell membrane. This is an uncharacterized protein from Mycobacterium leprae (strain TN).